The following is a 70-amino-acid chain: Cytochrome c oxidase subunit 8B, mitochondrial (70 aa).

Residues 1–24 (MPRLPPALRLLQPPLRCWVVPKLH) constitute a mitochondrion transit peptide. Over 25–35 (VSAKPARTPTS) the chain is Mitochondrial matrix. The helical transmembrane segment at 36–59 (PAEQAVGLSMMFLSFLVPAGWVLS) threads the bilayer. The Mitochondrial intermembrane portion of the chain corresponds to 60-70 (HLESYKKSSTA).

It belongs to the cytochrome c oxidase VIII family. As to quaternary structure, component of the cytochrome c oxidase (complex IV, CIV), a multisubunit enzyme composed of 14 subunits. The complex is composed of a catalytic core of 3 subunits MT-CO1, MT-CO2 and MT-CO3, encoded in the mitochondrial DNA, and 11 supernumerary subunits COX4I, COX5A, COX5B, COX6A, COX6B, COX6C, COX7A, COX7B, COX7C, COX8 and NDUFA4, which are encoded in the nuclear genome. The complex exists as a monomer or a dimer and forms supercomplexes (SCs) in the inner mitochondrial membrane with NADH-ubiquinone oxidoreductase (complex I, CI) and ubiquinol-cytochrome c oxidoreductase (cytochrome b-c1 complex, complex III, CIII), resulting in different assemblies (supercomplex SCI(1)III(2)IV(1) and megacomplex MCI(2)III(2)IV(2)).

The protein localises to the mitochondrion inner membrane. The protein operates within energy metabolism; oxidative phosphorylation. Component of the cytochrome c oxidase, the last enzyme in the mitochondrial electron transport chain which drives oxidative phosphorylation. The respiratory chain contains 3 multisubunit complexes succinate dehydrogenase (complex II, CII), ubiquinol-cytochrome c oxidoreductase (cytochrome b-c1 complex, complex III, CIII) and cytochrome c oxidase (complex IV, CIV), that cooperate to transfer electrons derived from NADH and succinate to molecular oxygen, creating an electrochemical gradient over the inner membrane that drives transmembrane transport and the ATP synthase. Cytochrome c oxidase is the component of the respiratory chain that catalyzes the reduction of oxygen to water. Electrons originating from reduced cytochrome c in the intermembrane space (IMS) are transferred via the dinuclear copper A center (CU(A)) of subunit 2 and heme A of subunit 1 to the active site in subunit 1, a binuclear center (BNC) formed by heme A3 and copper B (CU(B)). The BNC reduces molecular oxygen to 2 water molecules using 4 electrons from cytochrome c in the IMS and 4 protons from the mitochondrial matrix. The protein is Cytochrome c oxidase subunit 8B, mitochondrial (COX8B) of Eulemur fulvus fulvus (Brown lemur).